Here is a 152-residue protein sequence, read N- to C-terminus: Xanthine-guanine phosphoribosyltransferase (152 aa).

5-phospho-alpha-D-ribose 1-diphosphate is bound by residues 37–38, Arg-69, and 88–96; these read RG and DDLVDTGGT. Arg-69 lines the GMP pocket. Asp-89 lines the Mg(2+) pocket. Guanine-binding residues include Asp-92 and Ile-135. Xanthine is bound by residues Asp-92 and Ile-135. Residues 92–96 and 134–135 contribute to the GMP site; these read DTGGT and WI.

Belongs to the purine/pyrimidine phosphoribosyltransferase family. XGPT subfamily. As to quaternary structure, homotetramer. Requires Mg(2+) as cofactor.

Its subcellular location is the cell inner membrane. It catalyses the reaction GMP + diphosphate = guanine + 5-phospho-alpha-D-ribose 1-diphosphate. It carries out the reaction XMP + diphosphate = xanthine + 5-phospho-alpha-D-ribose 1-diphosphate. The enzyme catalyses IMP + diphosphate = hypoxanthine + 5-phospho-alpha-D-ribose 1-diphosphate. The protein operates within purine metabolism; GMP biosynthesis via salvage pathway; GMP from guanine: step 1/1. Its pathway is purine metabolism; XMP biosynthesis via salvage pathway; XMP from xanthine: step 1/1. Functionally, purine salvage pathway enzyme that catalyzes the transfer of the ribosyl-5-phosphate group from 5-phospho-alpha-D-ribose 1-diphosphate (PRPP) to the N9 position of the 6-oxopurines guanine and xanthine to form the corresponding ribonucleotides GMP (guanosine 5'-monophosphate) and XMP (xanthosine 5'-monophosphate), with the release of PPi. To a lesser extent, also acts on hypoxanthine. This Pectobacterium carotovorum subsp. carotovorum (strain PC1) protein is Xanthine-guanine phosphoribosyltransferase.